The following is a 352-amino-acid chain: N-acetyl-gamma-glutamyl-phosphate reductase (352 aa).

The active site involves C155.

Belongs to the NAGSA dehydrogenase family. Type 1 subfamily.

The protein resides in the cytoplasm. The catalysed reaction is N-acetyl-L-glutamate 5-semialdehyde + phosphate + NADP(+) = N-acetyl-L-glutamyl 5-phosphate + NADPH + H(+). It functions in the pathway amino-acid biosynthesis; L-arginine biosynthesis; N(2)-acetyl-L-ornithine from L-glutamate: step 3/4. In terms of biological role, catalyzes the NADPH-dependent reduction of N-acetyl-5-glutamyl phosphate to yield N-acetyl-L-glutamate 5-semialdehyde. In Acaryochloris marina (strain MBIC 11017), this protein is N-acetyl-gamma-glutamyl-phosphate reductase.